Consider the following 191-residue polypeptide: Protein GrpE (191 aa).

Residues 1 to 22 (MKDKHNQEHDHLSQEEPESCEK) are disordered.

The protein belongs to the GrpE family. As to quaternary structure, homodimer.

The protein resides in the cytoplasm. Participates actively in the response to hyperosmotic and heat shock by preventing the aggregation of stress-denatured proteins, in association with DnaK and GrpE. It is the nucleotide exchange factor for DnaK and may function as a thermosensor. Unfolded proteins bind initially to DnaJ; upon interaction with the DnaJ-bound protein, DnaK hydrolyzes its bound ATP, resulting in the formation of a stable complex. GrpE releases ADP from DnaK; ATP binding to DnaK triggers the release of the substrate protein, thus completing the reaction cycle. Several rounds of ATP-dependent interactions between DnaJ, DnaK and GrpE are required for fully efficient folding. This chain is Protein GrpE, found in Helicobacter pylori (strain Shi470).